Consider the following 377-residue polypeptide: Alanine racemase (377 aa).

The active-site Proton acceptor; specific for D-alanine is lysine 37. Lysine 37 bears the N6-(pyridoxal phosphate)lysine mark. Arginine 135 contacts substrate. The active-site Proton acceptor; specific for L-alanine is the tyrosine 271. Methionine 319 contributes to the substrate binding site.

This sequence belongs to the alanine racemase family. Pyridoxal 5'-phosphate serves as cofactor.

The enzyme catalyses L-alanine = D-alanine. It participates in amino-acid biosynthesis; D-alanine biosynthesis; D-alanine from L-alanine: step 1/1. Functionally, catalyzes the interconversion of L-alanine and D-alanine. May also act on other amino acids. This Helicobacter pylori (strain G27) protein is Alanine racemase (alr).